We begin with the raw amino-acid sequence, 271 residues long: Urease accessory protein UreD (271 aa).

The protein belongs to the UreD family. In terms of assembly, ureD, UreF and UreG form a complex that acts as a GTP-hydrolysis-dependent molecular chaperone, activating the urease apoprotein by helping to assemble the nickel containing metallocenter of UreC. The UreE protein probably delivers the nickel.

Its subcellular location is the cytoplasm. Its function is as follows. Required for maturation of urease via the functional incorporation of the urease nickel metallocenter. The sequence is that of Urease accessory protein UreD from Mycolicibacterium smegmatis (strain ATCC 700084 / mc(2)155) (Mycobacterium smegmatis).